The chain runs to 200 residues: 3-isopropylmalate dehydratase small subunit (200 aa).

The protein belongs to the LeuD family. LeuD type 1 subfamily. As to quaternary structure, heterodimer of LeuC and LeuD.

The catalysed reaction is (2R,3S)-3-isopropylmalate = (2S)-2-isopropylmalate. The protein operates within amino-acid biosynthesis; L-leucine biosynthesis; L-leucine from 3-methyl-2-oxobutanoate: step 2/4. Catalyzes the isomerization between 2-isopropylmalate and 3-isopropylmalate, via the formation of 2-isopropylmaleate. This is 3-isopropylmalate dehydratase small subunit from Actinobacillus pleuropneumoniae serotype 5b (strain L20).